Reading from the N-terminus, the 199-residue chain is Nucleoside triphosphate pyrophosphatase (199 aa).

Asp-76 functions as the Proton acceptor in the catalytic mechanism.

It belongs to the Maf family. Requires a divalent metal cation as cofactor.

The protein localises to the cytoplasm. It carries out the reaction a ribonucleoside 5'-triphosphate + H2O = a ribonucleoside 5'-phosphate + diphosphate + H(+). The enzyme catalyses a 2'-deoxyribonucleoside 5'-triphosphate + H2O = a 2'-deoxyribonucleoside 5'-phosphate + diphosphate + H(+). Functionally, nucleoside triphosphate pyrophosphatase. May have a dual role in cell division arrest and in preventing the incorporation of modified nucleotides into cellular nucleic acids. This chain is Nucleoside triphosphate pyrophosphatase, found in Roseobacter denitrificans (strain ATCC 33942 / OCh 114) (Erythrobacter sp. (strain OCh 114)).